Here is a 311-residue protein sequence, read N- to C-terminus: L-lactate dehydrogenase 2 (311 aa).

NAD(+)-binding residues include V14, D35, and R40. R90 provides a ligand contact to substrate. Residues S103, 120–122 (ATN), and T145 each bind NAD(+). Position 122–125 (122–125 (NPCD)) interacts with substrate. 150-153 (DTTR) serves as a coordination point for substrate. Catalysis depends on H177, which acts as the Proton acceptor. Position 230 (T230) interacts with substrate.

It belongs to the LDH/MDH superfamily. LDH family. As to quaternary structure, homotetramer.

The protein resides in the cytoplasm. It carries out the reaction (S)-lactate + NAD(+) = pyruvate + NADH + H(+). Its pathway is fermentation; pyruvate fermentation to lactate; (S)-lactate from pyruvate: step 1/1. In terms of biological role, catalyzes the conversion of lactate to pyruvate. This chain is L-lactate dehydrogenase 2, found in Listeria monocytogenes serotype 4b (strain F2365).